Here is a 252-residue protein sequence, read N- to C-terminus: MFSEEVLKNVFPLLEGEDLASCMGVCKQWRDIARDDFYWKCQCAKKWPSVCKRHKPPTETYYKMYQTFSKRRLNRALPPPRLSFENLEFFIDIWSEERLVFSGLIPGVALENGIETLPLGISNVLRTHLGRPDYKMVVPAEPRFTIPLNQSVSVSVLVARNDSDKVARIINRSVFDYIDRSSYRALAFEYLDLSPCYPFISGIRAWISLLFMDVEDMNDDGLLDVFGIQLDFNDVADTKEEVLWLLDMLDWK.

The F-box domain occupies 1-42; it reads MFSEEVLKNVFPLLEGEDLASCMGVCKQWRDIARDDFYWKCQ.

The sequence is that of F-box protein At5g39250 from Arabidopsis thaliana (Mouse-ear cress).